Here is a 250-residue protein sequence, read N- to C-terminus: MIDLNADLGEGFGRWTLTDDDALLSVVTSANVACGFHAGDPSVMRRVCDLAAERGVRIGAQVSYRDLAGFGRRAMDVPSDELAAEVAYQIGALRVFAEAAGAPVAYVKPHGALYNRTVHDEGQARAVVAGVRLAGGALPVLGLPGSRLLTAAAEAGLTGVPEAFADRAYTAEGSLVPRSEAGSVVTDEDAVVRRALAFAVEGSVEAVDGTAVAVAARSLCVHGDTPNAARIAARVREALETAGVGIGAFA.

Belongs to the LamB/PxpA family. Forms a complex composed of PxpA, PxpB and PxpC.

It catalyses the reaction 5-oxo-L-proline + ATP + 2 H2O = L-glutamate + ADP + phosphate + H(+). In terms of biological role, catalyzes the cleavage of 5-oxoproline to form L-glutamate coupled to the hydrolysis of ATP to ADP and inorganic phosphate. This is 5-oxoprolinase subunit A from Streptomyces coelicolor (strain ATCC BAA-471 / A3(2) / M145).